Reading from the N-terminus, the 201-residue chain is Phosphoprotein (201 aa).

Residues 1-70 (MATRPSSLVD…DQRTGREQLS (70 aa)) are disordered. 2 short sequence motifs (nuclear localization signal) span residues 29–36 (PRPRKIPR) and 181–193 (PPRI…SAPT).

Homomultimer; only active in its oligomeric state. Interacts with nucleoprotein/N. Interacts with matrix/M protein. Interacts with host TBK1. Interacts with polymerase L. Interacts with host HMGB1; this interaction is required to stabilize RNP on chromosomes. Phosphorylated by host PKC epsilon and casein kinase II.

Its subcellular location is the host nucleus. The protein localises to the host cytoplasm. Its function is as follows. Essential component of the RNA polymerase transcription and replication complex. Acts as a scaffold which brings L in close proximity to the N-RNA complex. Plays a role in the segregation of the viral genome in host daughter cells during mitosis by interacting with host HMGB1, a host chromatin-remodeling DNA architectural protein, thereby stabilizing RNP on chromosomes. Interacts with host TBK1 and thus interferes with activation of cellular antiviral state. Inhibits cellular histone acetyltransferase activities. The polypeptide is Phosphoprotein (P/X) (Bos taurus (Bovine)).